We begin with the raw amino-acid sequence, 479 residues long: Sulfate adenylyltransferase subunit 1 (479 aa).

The tr-type G domain maps to 25 to 239; the sequence is KSLLRFLTCG…EVLETVDIQR (215 aa). The interval 34-41 is G1; the sequence is GSVDDGKS. 34–41 is a GTP binding site; sequence GSVDDGKS. The segment at 92 to 96 is G2; sequence GITID. The tract at residues 113-116 is G3; sequence DTPG. GTP contacts are provided by residues 113–117 and 168–171; these read DTPGH and NKMD. Residues 168–171 form a G4 region; that stretch reads NKMD. Residues 206–208 form a G5 region; it reads SAL.

Belongs to the TRAFAC class translation factor GTPase superfamily. Classic translation factor GTPase family. CysN/NodQ subfamily. In terms of assembly, heterodimer composed of CysD, the smaller subunit, and CysN.

It carries out the reaction sulfate + ATP + H(+) = adenosine 5'-phosphosulfate + diphosphate. The protein operates within sulfur metabolism; hydrogen sulfide biosynthesis; sulfite from sulfate: step 1/3. Functionally, with CysD forms the ATP sulfurylase (ATPS) that catalyzes the adenylation of sulfate producing adenosine 5'-phosphosulfate (APS) and diphosphate, the first enzymatic step in sulfur assimilation pathway. APS synthesis involves the formation of a high-energy phosphoric-sulfuric acid anhydride bond driven by GTP hydrolysis by CysN coupled to ATP hydrolysis by CysD. The chain is Sulfate adenylyltransferase subunit 1 from Salmonella paratyphi A (strain ATCC 9150 / SARB42).